A 450-amino-acid chain; its full sequence is Asparagine--tRNA ligase (450 aa).

The protein belongs to the class-II aminoacyl-tRNA synthetase family. Homodimer.

It localises to the cytoplasm. It catalyses the reaction tRNA(Asn) + L-asparagine + ATP = L-asparaginyl-tRNA(Asn) + AMP + diphosphate + H(+). This chain is Asparagine--tRNA ligase, found in Enterococcus faecalis (strain ATCC 700802 / V583).